The sequence spans 146 residues: Transcription antitermination protein NusB (146 aa).

This sequence belongs to the NusB family.

Functionally, involved in transcription antitermination. Required for transcription of ribosomal RNA (rRNA) genes. Binds specifically to the boxA antiterminator sequence of the ribosomal RNA (rrn) operons. The protein is Transcription antitermination protein NusB of Solibacter usitatus (strain Ellin6076).